Consider the following 467-residue polypeptide: Asparagine--tRNA ligase (467 aa).

The protein belongs to the class-II aminoacyl-tRNA synthetase family. As to quaternary structure, homodimer.

The protein localises to the cytoplasm. The enzyme catalyses tRNA(Asn) + L-asparagine + ATP = L-asparaginyl-tRNA(Asn) + AMP + diphosphate + H(+). The chain is Asparagine--tRNA ligase from Actinobacillus succinogenes (strain ATCC 55618 / DSM 22257 / CCUG 43843 / 130Z).